The chain runs to 400 residues: Carbamoyl phosphate synthase small chain (400 aa).

Residues 1 to 199 (MSNETNANST…PYVIEAEGEA (199 aa)) form a CPSase region. L-glutamine is bound by residues Ser-66, Gly-250, and Gly-252. The 196-residue stretch at 200-395 (RHTVVAYDLG…VALMDEDSEN (196 aa)) folds into the Glutamine amidotransferase type-1 domain. Cys-278 serves as the catalytic Nucleophile. L-glutamine contacts are provided by Phe-279, Gln-282, Asn-320, Gly-322, and Phe-323. Catalysis depends on residues His-368 and Glu-370.

The protein belongs to the CarA family. Composed of two chains; the small (or glutamine) chain promotes the hydrolysis of glutamine to ammonia, which is used by the large (or ammonia) chain to synthesize carbamoyl phosphate. Tetramer of heterodimers (alpha,beta)4.

The catalysed reaction is hydrogencarbonate + L-glutamine + 2 ATP + H2O = carbamoyl phosphate + L-glutamate + 2 ADP + phosphate + 2 H(+). It carries out the reaction L-glutamine + H2O = L-glutamate + NH4(+). Its pathway is amino-acid biosynthesis; L-arginine biosynthesis; carbamoyl phosphate from bicarbonate: step 1/1. The protein operates within pyrimidine metabolism; UMP biosynthesis via de novo pathway; (S)-dihydroorotate from bicarbonate: step 1/3. In terms of biological role, small subunit of the glutamine-dependent carbamoyl phosphate synthetase (CPSase). CPSase catalyzes the formation of carbamoyl phosphate from the ammonia moiety of glutamine, carbonate, and phosphate donated by ATP, constituting the first step of 2 biosynthetic pathways, one leading to arginine and/or urea and the other to pyrimidine nucleotides. The small subunit (glutamine amidotransferase) binds and cleaves glutamine to supply the large subunit with the substrate ammonia. The protein is Carbamoyl phosphate synthase small chain of Corynebacterium efficiens (strain DSM 44549 / YS-314 / AJ 12310 / JCM 11189 / NBRC 100395).